Consider the following 172-residue polypeptide: Phosphatidylglycerophosphatase A (172 aa).

Over 1–31 (MTILPRHKDVAKSRLKMSNPWHLLAVGFGSG) the chain is Cytoplasmic. A helical membrane pass occupies residues 32-52 (LSPIVPGTMGSLAAIPFWYLM). A topological domain (periplasmic) is located at residue T53. The helical transmembrane segment at 54–74 (FLPWQLYSLVVMLGICIGVYL) threads the bilayer. Residues 75–141 (CHQTAKDMGV…RWFDRNVHGG (67 aa)) lie on the Cytoplasmic side of the membrane. Residues 142–162 (MGIMIDDIVAGVISAGILYFI) form a helical membrane-spanning segment. Residues 163–172 (GHHWPLGILS) lie on the Periplasmic side of the membrane.

Mg(2+) serves as cofactor.

It is found in the cell inner membrane. It carries out the reaction a 1,2-diacyl-sn-glycero-3-phospho-(1'-sn-glycero-3'-phosphate) + H2O = a 1,2-diacyl-sn-glycero-3-phospho-(1'-sn-glycerol) + phosphate. It functions in the pathway phospholipid metabolism; phosphatidylglycerol biosynthesis; phosphatidylglycerol from CDP-diacylglycerol: step 2/2. Lipid phosphatase which dephosphorylates phosphatidylglycerophosphate (PGP) to phosphatidylglycerol (PG). The protein is Phosphatidylglycerophosphatase A (pgpA) of Escherichia coli (strain K12).